The chain runs to 248 residues: Probable transcriptional regulatory protein PHZ_c3068 (248 aa).

The protein belongs to the TACO1 family.

It localises to the cytoplasm. In Phenylobacterium zucineum (strain HLK1), this protein is Probable transcriptional regulatory protein PHZ_c3068.